Consider the following 137-residue polypeptide: Oleosin Ara h 11.0101 (137 aa).

The residue at position 2 (Ala2) is an N-acetylalanine; alternate. Transmembrane regions (helical) follow at residues 27–47 and 55–75; these read AVVAGGSLLILAGLVLAGTVI and LFVIFSPVLVPAVITVALLGL.

Belongs to the oleosin family. Expressed in seeds (at protein level).

The protein resides in the lipid droplet. Its subcellular location is the membrane. May have a structural role to stabilize the lipid body during desiccation of the seed by preventing coalescence of the oil. Probably interacts with both lipid and phospholipid moieties of lipid bodies. May also provide recognition signals for specific lipase anchorage in lipolysis during seedling growth. This chain is Oleosin Ara h 11.0101, found in Arachis hypogaea (Peanut).